We begin with the raw amino-acid sequence, 550 residues long: Methionine--tRNA ligase (550 aa).

The short motif at 13–23 (PYANGEIHLGH) is the 'HIGH' region element. C144, C147, C157, and C160 together coordinate Zn(2+). The short motif at 329 to 333 (KMSKS) is the 'KMSKS' region element. K332 contributes to the ATP binding site.

This sequence belongs to the class-I aminoacyl-tRNA synthetase family. MetG type 1 subfamily. Monomer. Zn(2+) is required as a cofactor.

The protein localises to the cytoplasm. The enzyme catalyses tRNA(Met) + L-methionine + ATP = L-methionyl-tRNA(Met) + AMP + diphosphate. Its function is as follows. Is required not only for elongation of protein synthesis but also for the initiation of all mRNA translation through initiator tRNA(fMet) aminoacylation. This is Methionine--tRNA ligase from Ruthia magnifica subsp. Calyptogena magnifica.